We begin with the raw amino-acid sequence, 419 residues long: MDEEEHKDHQEEEDPHHFAFSDNYSEAVLGGEISATVFDVTGKVVHVAHKMTKYEFLLEHGLYPRDLRNIDPSPVSIIPSILARGRKGAGRCILVNLLHIKALILHDKVLIFDTHSKNKSDTHRLGMFLYELENKLKPTINPEKMHTDMTVLPFELRVLEAILVNVMTTLDGELQVHLKTLNEILVGLEDHVDREQLKELLIGNKNVSRFYQKAVLIRDVLEELLESDDDLQQLYLGTHPKEGLAEVELLIESYCKQADEIVQQASNVRSHIRSTEEIVNIIVDANRNALMLLELKVTIVTVGFAVGAFVAALYGMNLENFIEETNEGMVLVVGVACLGGLLVTWFNLTKLHKTQKIAMFSNAATHTASKPYMLQWIIGLLRRKRTKSRFDNIDMSRPKMKGKKSNILHQLTKMTGKRR.

2 consecutive transmembrane segments (helical) span residues 297–317 and 328–348; these read VTIVTVGFAVGAFVAALYGMN and GMVLVVGVACLGGLLVTWFNL. Positions 314–317 match the YGMN motif; it reads YGMN.

Belongs to the CorA metal ion transporter (MIT) (TC 1.A.35) family. Homopentamer. Forms homooligomers. Interacts with MFM1.

Its subcellular location is the mitochondrion inner membrane. High-conductance magnesium-selective channel that mediates the influx of magnesium into the mitochondrial matrix. Essential for the splicing of mRNA group II introns in mitochondria by affecting mitochondrial magnesium concentrations, which are critical for group II intron splicing. It also suppresses a variety of mitochondrial intron mutations and its absence may disturb the assembly of mitochondrial membrane complexes. This is Mitochondrial inner membrane magnesium transporter MRS2 (MRS2) from Yarrowia lipolytica (strain CLIB 122 / E 150) (Yeast).